Here is a 187-residue protein sequence, read N- to C-terminus: Capsid protein (187 aa).

The tract at residues 150-187 is disordered; that stretch reads RRGGARASRSPRRRTPSPRRRRSQSPRRRRSQSPSANC. Positions 158–180 are enriched in basic residues; it reads RSPRRRTPSPRRRRSQSPRRRRS. 3 positions are modified to phosphoserine; by host: Ser-159, Ser-166, and Ser-174. A 1; half-length repeat occupies 159-165; the sequence is SPRRRTP. The 3 X 8 AA repeats of S-P-R-R-R-[PR]-S-Q stretch occupies residues 159–181; the sequence is SPRRRTPSPRRRRSQSPRRRRSQ. The short motif at 162–179 is the Bipartite nuclear localization signal element; sequence RRTPSPRRRRSQSPRRRR. Tandem repeats lie at residues 166 to 173 and 174 to 181. Residues 181 to 187 are RNA binding; sequence QSPSANC.

This sequence belongs to the orthohepadnavirus core antigen family. Homodimerizes, then multimerizes. Interacts with cytosol exposed regions of viral L glycoprotein present in the reticulum-to-Golgi compartment. Interacts with human FLNB. Phosphorylated form interacts with host importin alpha; this interaction depends on the exposure of the NLS, which itself depends upon genome maturation and/or phosphorylation of the capsid protein. Interacts with host NUP153. Phosphorylated by host SRPK1, SRPK2, and maybe protein kinase C or GAPDH. Phosphorylation is critical for pregenomic RNA packaging. Protein kinase C phosphorylation is stimulated by HBx protein and may play a role in transport of the viral genome to the nucleus at the late step during the viral replication cycle.

Its subcellular location is the virion. The protein localises to the host cytoplasm. Its function is as follows. Self assembles to form an icosahedral capsid. Most capsids appear to be large particles with an icosahedral symmetry of T=4 and consist of 240 copies of capsid protein, though a fraction forms smaller T=3 particles consisting of 180 capsid proteins. Entering capsids are transported along microtubules to the nucleus. Phosphorylation of the capsid is thought to induce exposure of nuclear localization signal in the C-terminal portion of the capsid protein that allows binding to the nuclear pore complex via the importin (karyopherin-) alpha and beta. Capsids are imported in intact form through the nuclear pore into the nuclear basket, where it probably binds NUP153. Only capsids that contain the mature viral genome can release the viral DNA and capsid protein into the nucleoplasm. Immature capsids get stuck in the basket. Capsids encapsulate the pre-genomic RNA and the P protein. Pre-genomic RNA is reverse-transcribed into DNA while the capsid is still in the cytoplasm. The capsid can then either be directed to the nucleus, providing more genomes for transcription, or bud through the endoplasmic reticulum to provide new virions. This Marmota monax (Woodchuck) protein is Capsid protein.